Here is a 257-residue protein sequence, read N- to C-terminus: UPF0246 protein BF4021 (257 aa).

Belongs to the UPF0246 family.

This chain is UPF0246 protein BF4021, found in Bacteroides fragilis (strain YCH46).